The sequence spans 107 residues: Death-associated protein-like 1 (107 aa).

The segment at 1-23 (MANEVQDLLSPRKGGHPPAVKAG) is disordered.

As to expression, expressed in hair follicle (at protein level).

Functionally, may play a role in the early stages of epithelial differentiation or in apoptosis. In Homo sapiens (Human), this protein is Death-associated protein-like 1 (DAPL1).